The primary structure comprises 323 residues: Beta-ketoacyl-[acyl-carrier-protein] synthase III (323 aa).

Active-site residues include Cys114 and His250. The interval 251–255 (QANLR) is ACP-binding. Asn280 is an active-site residue.

The protein belongs to the thiolase-like superfamily. FabH family. Homodimer.

The protein localises to the cytoplasm. It catalyses the reaction malonyl-[ACP] + acetyl-CoA + H(+) = 3-oxobutanoyl-[ACP] + CO2 + CoA. The protein operates within lipid metabolism; fatty acid biosynthesis. Its function is as follows. Catalyzes the condensation reaction of fatty acid synthesis by the addition to an acyl acceptor of two carbons from malonyl-ACP. Catalyzes the first condensation reaction which initiates fatty acid synthesis and may therefore play a role in governing the total rate of fatty acid production. Possesses both acetoacetyl-ACP synthase and acetyl transacylase activities. Its substrate specificity determines the biosynthesis of branched-chain and/or straight-chain of fatty acids. The sequence is that of Beta-ketoacyl-[acyl-carrier-protein] synthase III from Cereibacter sphaeroides (strain ATCC 17029 / ATH 2.4.9) (Rhodobacter sphaeroides).